A 231-amino-acid chain; its full sequence is 7-cyano-7-deazaguanine synthase (231 aa).

8-18 (FSGGQDSTTCL) contacts ATP. 4 residues coordinate Zn(2+): cysteine 188, cysteine 197, cysteine 200, and cysteine 203.

This sequence belongs to the QueC family. Zn(2+) serves as cofactor.

The catalysed reaction is 7-carboxy-7-deazaguanine + NH4(+) + ATP = 7-cyano-7-deazaguanine + ADP + phosphate + H2O + H(+). It participates in purine metabolism; 7-cyano-7-deazaguanine biosynthesis. Functionally, catalyzes the ATP-dependent conversion of 7-carboxy-7-deazaguanine (CDG) to 7-cyano-7-deazaguanine (preQ(0)). The chain is 7-cyano-7-deazaguanine synthase from Erwinia tasmaniensis (strain DSM 17950 / CFBP 7177 / CIP 109463 / NCPPB 4357 / Et1/99).